The following is a 309-amino-acid chain: ATP synthase gamma chain (309 aa).

The protein belongs to the ATPase gamma chain family. In terms of assembly, F-type ATPases have 2 components, CF(1) - the catalytic core - and CF(0) - the membrane proton channel. CF(1) has five subunits: alpha(3), beta(3), gamma(1), delta(1), epsilon(1). CF(0) has three main subunits: a, b and c.

Its subcellular location is the cell membrane. Its function is as follows. Produces ATP from ADP in the presence of a proton gradient across the membrane. The gamma chain is believed to be important in regulating ATPase activity and the flow of protons through the CF(0) complex. The sequence is that of ATP synthase gamma chain from Mycolicibacterium gilvum (strain PYR-GCK) (Mycobacterium gilvum (strain PYR-GCK)).